Reading from the N-terminus, the 521-residue chain is FAD-dependent monooxygenase DEP2 (521 aa).

The signal sequence occupies residues Met1–Ala22. FAD contacts are provided by Asp36 and Arg109. 2 N-linked (GlcNAc...) asparagine glycosylation sites follow: Asn139 and Asn220. Residues Asp310 and Gly323 each contribute to the FAD site. A helical transmembrane segment spans residues Ile477–Gly497. Asn515 carries an N-linked (GlcNAc...) asparagine glycan.

The protein belongs to the paxM FAD-dependent monooxygenase family. FAD serves as cofactor.

It localises to the membrane. Its pathway is polyketide biosynthesis. Part of the gene cluster that mediates the biosynthesis of depudecin, a highly oxidized eleven-carbon linear polyketide that acts as a histone deacetylase (HDAC) inhibitor and makes a small contribution to pathogenesis. The reducing polyketide synthase DEP5 is the central enzyme in depudecin biosynthesis by yielding the backbone polyketide chain. The monooxygenases DEP2 and DEP4, as well as the uncharacterized protein DEP1, then act as tailoring enzymes to modify the intermediate polyketide chain into depudecin. The protein is FAD-dependent monooxygenase DEP2 of Fusarium langsethiae.